Reading from the N-terminus, the 258-residue chain is Imidazole glycerol phosphate synthase subunit HisF (258 aa).

Residues D11 and D130 contribute to the active site.

This sequence belongs to the HisA/HisF family. Heterodimer of HisH and HisF.

It is found in the cytoplasm. The catalysed reaction is 5-[(5-phospho-1-deoxy-D-ribulos-1-ylimino)methylamino]-1-(5-phospho-beta-D-ribosyl)imidazole-4-carboxamide + L-glutamine = D-erythro-1-(imidazol-4-yl)glycerol 3-phosphate + 5-amino-1-(5-phospho-beta-D-ribosyl)imidazole-4-carboxamide + L-glutamate + H(+). The protein operates within amino-acid biosynthesis; L-histidine biosynthesis; L-histidine from 5-phospho-alpha-D-ribose 1-diphosphate: step 5/9. Its function is as follows. IGPS catalyzes the conversion of PRFAR and glutamine to IGP, AICAR and glutamate. The HisF subunit catalyzes the cyclization activity that produces IGP and AICAR from PRFAR using the ammonia provided by the HisH subunit. The protein is Imidazole glycerol phosphate synthase subunit HisF of Escherichia coli O1:K1 / APEC.